The chain runs to 153 residues: DNA gyrase inhibitor 1 (153 aa).

It belongs to the DNA gyrase inhibitor family. As to quaternary structure, interacts with DNA gyrase.

It localises to the cytoplasm. Its function is as follows. Inhibits the supercoiling activity of DNA gyrase. Acts by inhibiting DNA gyrase at an early step, prior to (or at the step of) binding of DNA by the gyrase. It protects cells against toxins that target DNA gyrase, by inhibiting activity of these toxins and reducing the formation of lethal double-strand breaks in the cell. The protein is DNA gyrase inhibitor 1 of Dickeya dadantii (strain 3937) (Erwinia chrysanthemi (strain 3937)).